The sequence spans 60 residues: Homeobox protein engrailed-like B (60 aa).

A DNA-binding region (homeobox) is located at residues 1–41 (VEQLQRLKSEFGASRYLTEARRQALAQELRLNEAQIKIWFQ).

The protein belongs to the engrailed homeobox family.

It is found in the nucleus. The polypeptide is Homeobox protein engrailed-like B (Myxine glutinosa (Atlantic hagfish)).